Consider the following 907-residue polypeptide: Protein translocase subunit SecA (907 aa).

ATP is bound by residues glutamine 87, 105–109 (GEGKT), and aspartate 513. Residues 841-853 (EAQRRAQAEEAAR) show a composition bias toward basic and acidic residues. A disordered region spans residues 841–907 (EAQRRAQAEE…KYKQCHGQIN (67 aa)). The span at 854-865 (RAQAQHASAQSQ) shows a compositional bias: low complexity. The span at 872–887 (EGHHQPVVRDERKVGR) shows a compositional bias: basic and acidic residues. 4 residues coordinate Zn(2+): cysteine 891, cysteine 893, cysteine 902, and histidine 903.

This sequence belongs to the SecA family. As to quaternary structure, monomer and homodimer. Part of the essential Sec protein translocation apparatus which comprises SecA, SecYEG and auxiliary proteins SecDF-YajC and YidC. Zn(2+) is required as a cofactor.

The protein resides in the cell inner membrane. It localises to the cytoplasm. The catalysed reaction is ATP + H2O + cellular proteinSide 1 = ADP + phosphate + cellular proteinSide 2.. In terms of biological role, part of the Sec protein translocase complex. Interacts with the SecYEG preprotein conducting channel. Has a central role in coupling the hydrolysis of ATP to the transfer of proteins into and across the cell membrane, serving both as a receptor for the preprotein-SecB complex and as an ATP-driven molecular motor driving the stepwise translocation of polypeptide chains across the membrane. The protein is Protein translocase subunit SecA of Vibrio vulnificus (strain YJ016).